A 739-amino-acid chain; its full sequence is Phosphoribosylformylglycinamidine synthase subunit PurL (739 aa).

Residue H54 is part of the active site. Residues Y57 and K96 each contribute to the ATP site. A Mg(2+)-binding site is contributed by E98. Residues 99–102 (SHNH) and R121 contribute to the substrate site. The active-site Proton acceptor is H100. D122 is a binding site for Mg(2+). Q245 is a binding site for substrate. D273 contacts Mg(2+). 317–319 (ESQ) contributes to the substrate binding site. ATP is bound by residues D500 and G537. Mg(2+) is bound at residue N538. S540 provides a ligand contact to substrate.

The protein belongs to the FGAMS family. As to quaternary structure, monomer. Part of the FGAM synthase complex composed of 1 PurL, 1 PurQ and 2 PurS subunits.

Its subcellular location is the cytoplasm. It carries out the reaction N(2)-formyl-N(1)-(5-phospho-beta-D-ribosyl)glycinamide + L-glutamine + ATP + H2O = 2-formamido-N(1)-(5-O-phospho-beta-D-ribosyl)acetamidine + L-glutamate + ADP + phosphate + H(+). The protein operates within purine metabolism; IMP biosynthesis via de novo pathway; 5-amino-1-(5-phospho-D-ribosyl)imidazole from N(2)-formyl-N(1)-(5-phospho-D-ribosyl)glycinamide: step 1/2. In terms of biological role, part of the phosphoribosylformylglycinamidine synthase complex involved in the purines biosynthetic pathway. Catalyzes the ATP-dependent conversion of formylglycinamide ribonucleotide (FGAR) and glutamine to yield formylglycinamidine ribonucleotide (FGAM) and glutamate. The FGAM synthase complex is composed of three subunits. PurQ produces an ammonia molecule by converting glutamine to glutamate. PurL transfers the ammonia molecule to FGAR to form FGAM in an ATP-dependent manner. PurS interacts with PurQ and PurL and is thought to assist in the transfer of the ammonia molecule from PurQ to PurL. The sequence is that of Phosphoribosylformylglycinamidine synthase subunit PurL from Bacillus cereus (strain Q1).